Reading from the N-terminus, the 205-residue chain is Outer-membrane lipoprotein LolB (205 aa).

The signal sequence occupies residues 1–17 (MFLRHCITFTMIALLAG). Cys18 carries the N-palmitoyl cysteine lipid modification. Cys18 carries S-diacylglycerol cysteine lipidation.

This sequence belongs to the LolB family. As to quaternary structure, monomer.

It localises to the cell outer membrane. Functionally, plays a critical role in the incorporation of lipoproteins in the outer membrane after they are released by the LolA protein. The sequence is that of Outer-membrane lipoprotein LolB from Pseudomonas putida (strain ATCC 700007 / DSM 6899 / JCM 31910 / BCRC 17059 / LMG 24140 / F1).